The chain runs to 829 residues: Probable beta-glucosidase H (829 aa).

N-linked (GlcNAc...) asparagine glycosylation occurs at Asn13. Asp225 is an active-site residue. N-linked (GlcNAc...) asparagine glycosylation is found at Asn304, Asn473, Asn602, Asn627, and Asn664. Residues Arg389–Val548 enclose the PA14 domain.

The protein belongs to the glycosyl hydrolase 3 family.

The protein localises to the secreted. It catalyses the reaction Hydrolysis of terminal, non-reducing beta-D-glucosyl residues with release of beta-D-glucose.. It participates in glycan metabolism; cellulose degradation. Functionally, beta-glucosidases are one of a number of cellulolytic enzymes involved in the degradation of cellulosic biomass. Catalyzes the last step releasing glucose from the inhibitory cellobiose. This Neosartorya fischeri (strain ATCC 1020 / DSM 3700 / CBS 544.65 / FGSC A1164 / JCM 1740 / NRRL 181 / WB 181) (Aspergillus fischerianus) protein is Probable beta-glucosidase H (bglH).